The primary structure comprises 100 residues: MSRVCDITGQTKSFGNKVSHSNRKTKRTYLVNLHNVTLFSDVLNRKFRFKISSRTLRTIDYKGGLDLYLLETSSRKLSDKAQKIKKMIKKATAENAKVSL.

This sequence belongs to the bacterial ribosomal protein bL28 family.

The polypeptide is Large ribosomal subunit protein bL28 (Ehrlichia ruminantium (strain Welgevonden)).